Here is a 290-residue protein sequence, read N- to C-terminus: F-box protein PP2-A13 (290 aa).

One can recognise an F-box domain in the interval 21-67 (RKLRLVDLPENCVALIMTRLDPPEICRLARLNRMFRRASSADFIWES).

Part of a SCF (ASK-cullin-F-box) protein ligase complex. Interacts with SKP1A/ASK1, SKP1B/ASK2, ASK5, ASK11 and ASK13.

Its subcellular location is the nucleus. Its pathway is protein modification; protein ubiquitination. In terms of biological role, component of SCF(ASK-cullin-F-box) E3 ubiquitin ligase complexes, which may mediate the ubiquitination and subsequent proteasomal degradation of target proteins. The chain is F-box protein PP2-A13 (PP2A13) from Arabidopsis thaliana (Mouse-ear cress).